We begin with the raw amino-acid sequence, 197 residues long: GCN5-related N-acetyltransferase 1, chloroplastic (197 aa).

A chloroplast-targeting transit peptide spans 1–37; the sequence is MFLGGTISTPPASLRLRSTLNPQNAVTQSSSQATFPA. Polar residues predominate over residues 23–34; it reads QNAVTQSSSQAT. The segment at 23-46 is disordered; that stretch reads QNAVTQSSSQATFPAAMQRKPPSY. The N-acetyltransferase domain occupies 58–195; the sequence is FLLRRTTEGL…GMVFIRKQRN (138 aa). Acetyl-CoA is bound by residues 129 to 131, 137 to 142, 165 to 167, and Y172; these read VVV, SCGLGK, and EPR. Y172 (proton donor) is an active-site residue.

The protein belongs to the acetyltransferase family. GNAT subfamily. Oligomer. Post-translationally, autoacetylated. In terms of tissue distribution, expressed in green tissues. Accumulates mainly in flowers and young leaves, and, to a lower extent, in stems and mature leaves, but barely in roots.

The protein resides in the plastid. Its subcellular location is the chloroplast. The enzyme catalyses an N-terminal L-alpha-aminoacyl-[protein] + acetyl-CoA = N-terminal N(alpha)-acetyl-L-alpha-aminoacyl-[protein] + CoA + H(+). It carries out the reaction L-lysyl-[protein] + acetyl-CoA = N(6)-acetyl-L-lysyl-[protein] + CoA + H(+). The catalysed reaction is 5-methoxytryptamine + acetyl-CoA = melatonin + CoA + H(+). It catalyses the reaction serotonin + acetyl-CoA = N-acetylserotonin + CoA + H(+). Its activity is regulated as follows. Inhibited by 5-methoxytryptamine in vitro. In terms of biological role, protein acetyltransferase with dual specificity triggering both N-alpha-acetylation (NTA) and epsilon-lysine acetylation (KA), possibly with a low efficiency or toward specific plastid substrates. Involved in melatonin biosynthesis by catalyzing the formation of N-acetylserotonin (NAS) from serotonin and of melatonin (N-acetyl-5-methoxytryptamine) from 5-methoxytryptamine (5-MT). The protein is GCN5-related N-acetyltransferase 1, chloroplastic of Arabidopsis thaliana (Mouse-ear cress).